A 943-amino-acid polypeptide reads, in one-letter code: Glutamate receptor ionotropic, NMDA 1 (943 aa).

Positions 1–20 (MSTMRLLTLALLFSCSFARA) are cleaved as a signal peptide. At 21–580 (ACDPKIVNIG…TLDSFMQPFQ (560 aa)) the chain is on the extracellular side. N-linked (GlcNAc...) asparagine glycans are attached at residues N61, N224, N260, N297, N321, N371, N389, N461, N492, and N512. A disulfide bridge connects residues C79 and C329. Cystine bridges form between C441–C475 and C457–C476. P537, T539, and R544 together coordinate glycine. Residues 581–601 (STLWLLVGLSVHVVAVMLYLL) form a helical membrane-spanning segment. Residues 602-623 (DRFSPFGRFKVNSEEEEEDALT) lie on the Cytoplasmic side of the membrane. The discontinuously helical intramembrane region spans 624-645 (LSSAMWFSWGVLLNSGIGEGAP). Positions 624–645 (LSSAMWFSWGVLLNSGIGEGAP) are pore-forming. Over 646-651 (RSFSAR) the chain is Cytoplasmic. A helical membrane pass occupies residues 652–668 (ILGMVWAGFAMIIVASY). Residues 669 to 833 (TANLAAFLVL…NAPATLTFEN (165 aa)) lie on the Extracellular side of the membrane. N695 carries N-linked (GlcNAc...) asparagine glycosylation. S709 and D753 together coordinate glycine. C765 and C819 are joined by a disulfide. N792 carries N-linked (GlcNAc...) asparagine glycosylation. The chain crosses the membrane as a helical span at residues 834 to 854 (MAGVFMLVAGGIVAGIFLIFI). Residues 855 to 943 (EIAYKRHKDA…LSDPSVSTVV (89 aa)) lie on the Cytoplasmic side of the membrane. Phosphoserine is present on residues S910, S911, S917, and S918.

The protein belongs to the glutamate-gated ion channel (TC 1.A.10.1) family. NR1/GRIN1 subfamily. In terms of assembly, heterotetramer; the NMDAR subunits are modular and harbor tiered domains that function in concert to regulate opening and closing of the cation-selective ion channel pore. Forms heterotetrameric channels composed of two GluN1/zeta subunits (GRIN1), and two identical GluN2/epsilon subunits (GRIN2A, GRIN2B, GRIN2C or GRIN2D) or GluN3 subunits (GRIN3A or GRIN3B) (in vitro). Can also form heterotetrameric channels that contain at least two GluN1 subunits and at least two different GluN2 subunits (or a combination of one GluN2 and one GluN3 subunits) (in vitro). In vivo, the subunit composition may vary in function of the expression levels of the different subunits. Found in a complex with GRIN2A or GRIN2B, GRIN3A and PPP2CB. Found in a complex with GRIN2A or GRIN2B and GRIN3B. Interacts with SNX27 (via PDZ domain); the interaction is required for recycling to the plasma membrane when endocytosed and prevent degradation in lysosomes. Interacts with DLG4 and MPDZ. Interacts with LRFN1 and LRFN2. Interacts with MYZAP. Found in a complex with DLG4 and PRR7. Found in a complex with GRIN2B and PRR7. Interacts with PRR7; the interaction is reduced following NMDA receptor activity. In terms of processing, NMDA is probably regulated by C-terminal phosphorylation of an isoform of GRIN1 by PKC. Dephosphorylated on Ser-897 probably by protein phosphatase 2A (PPP2CB). Its phosphorylated state is influenced by the formation of the NMDAR-PPP2CB complex and the NMDAR channel activity.

The protein localises to the cell membrane. Its subcellular location is the postsynaptic cell membrane. It localises to the postsynaptic density membrane. It is found in the synaptic cell membrane. The catalysed reaction is Ca(2+)(in) = Ca(2+)(out). It carries out the reaction Na(+)(in) = Na(+)(out). The enzyme catalyses K(+)(in) = K(+)(out). Functionally, component of N-methyl-D-aspartate (NMDA) receptors (NMDARs) that function as heterotetrameric, ligand-gated cation channels with high calcium permeability and voltage-dependent block by Mg(2+). NMDARs participate in synaptic plasticity for learning and memory formation by contributing to the long-term potentiation (LTP). Channel activation requires binding of the neurotransmitter L-glutamate to the GluN2 subunit, glycine or D-serine binding to the GluN1 subunit, plus membrane depolarization to eliminate channel inhibition by Mg(2+). NMDARs mediate simultaneously the potasium efflux and the influx of calcium and sodium. Each GluN2 or GluN3 subunit confers differential attributes to channel properties, including activation, deactivation and desensitization kinetics, pH sensitivity, Ca2(+) permeability, and binding to allosteric modulators. The GluN3 subunits confer distinctive ion channel activation mechanism, which relies exclusively on glycine and does not involve glutamate. The protein is Glutamate receptor ionotropic, NMDA 1 of Canis lupus familiaris (Dog).